The primary structure comprises 159 residues: Protein NrdI (159 aa).

The protein belongs to the NrdI family.

In terms of biological role, probably involved in ribonucleotide reductase function. The sequence is that of Protein NrdI from Rhodococcus erythropolis (strain PR4 / NBRC 100887).